A 389-amino-acid polypeptide reads, in one-letter code: Protein CysO (389 aa).

Lysine 127 carries the post-translational modification N6-(pyridoxal phosphate)lysine. Residues asparagine 155, glycine 261–histidine 265, and serine 341 each bind pyridoxal 5'-phosphate.

It belongs to the cysteine synthase/cystathionine beta-synthase family. In terms of assembly, homodimer. It depends on pyridoxal 5'-phosphate as a cofactor.

It carries out the reaction O-acetyl-L-serine + hydrogen sulfide = L-cysteine + acetate. The catalysed reaction is O-phospho-L-serine + hydrogen sulfide + H(+) = L-cysteine + phosphate. It catalyses the reaction L-homocysteine + L-serine = L,L-cystathionine + H2O. It participates in amino-acid biosynthesis; L-cysteine biosynthesis; L-cysteine from L-serine: step 2/2. Cysteine synthase that can also catalyze the synthesis of S-sulfo-L-cysteine from thiosulfate and O(3)-acetyl-L-serine, as well as the sulfhydrylation of L-serine by sulfide. This chain is Protein CysO (cysO), found in Aeropyrum pernix (strain ATCC 700893 / DSM 11879 / JCM 9820 / NBRC 100138 / K1).